The sequence spans 466 residues: ATP synthase subunit beta (466 aa).

Residue 153–160 (GGAGVGKT) coordinates ATP.

It belongs to the ATPase alpha/beta chains family. As to quaternary structure, F-type ATPases have 2 components, CF(1) - the catalytic core - and CF(0) - the membrane proton channel. CF(1) has five subunits: alpha(3), beta(3), gamma(1), delta(1), epsilon(1). CF(0) has three main subunits: a(1), b(2) and c(9-12). The alpha and beta chains form an alternating ring which encloses part of the gamma chain. CF(1) is attached to CF(0) by a central stalk formed by the gamma and epsilon chains, while a peripheral stalk is formed by the delta and b chains.

Its subcellular location is the cell membrane. The enzyme catalyses ATP + H2O + 4 H(+)(in) = ADP + phosphate + 5 H(+)(out). Functionally, produces ATP from ADP in the presence of a proton gradient across the membrane. The catalytic sites are hosted primarily by the beta subunits. The chain is ATP synthase subunit beta from Clostridium acetobutylicum (strain ATCC 824 / DSM 792 / JCM 1419 / IAM 19013 / LMG 5710 / NBRC 13948 / NRRL B-527 / VKM B-1787 / 2291 / W).